We begin with the raw amino-acid sequence, 389 residues long: Succinate--CoA ligase [ADP-forming] subunit beta (389 aa).

The region spanning K9 to E244 is the ATP-grasp domain. ATP-binding positions include K46, G53 to G55, E99, A102, and E107. Mg(2+) is bound by residues N199 and D213. Substrate contacts are provided by residues N264 and G321 to M323.

Belongs to the succinate/malate CoA ligase beta subunit family. In terms of assembly, heterotetramer of two alpha and two beta subunits. It depends on Mg(2+) as a cofactor.

The enzyme catalyses succinate + ATP + CoA = succinyl-CoA + ADP + phosphate. It carries out the reaction GTP + succinate + CoA = succinyl-CoA + GDP + phosphate. It participates in carbohydrate metabolism; tricarboxylic acid cycle; succinate from succinyl-CoA (ligase route): step 1/1. Its function is as follows. Succinyl-CoA synthetase functions in the citric acid cycle (TCA), coupling the hydrolysis of succinyl-CoA to the synthesis of either ATP or GTP and thus represents the only step of substrate-level phosphorylation in the TCA. The beta subunit provides nucleotide specificity of the enzyme and binds the substrate succinate, while the binding sites for coenzyme A and phosphate are found in the alpha subunit. The polypeptide is Succinate--CoA ligase [ADP-forming] subunit beta (Polynucleobacter necessarius subsp. necessarius (strain STIR1)).